A 1442-amino-acid polypeptide reads, in one-letter code: MRSRRLLSAAHLLCLCAVALAAPGSRFLVTAPGIIRPGANVTIGVDLLENSPPQVLVKAQVFKIASNKSRSILEAEGVFHRGHFKTLVLPALPLSSADKIYELHINGQSENEIVFSNRTRLTFESKSISVLIQTDKAFYKPKQEVKFRVLTLCSDLKPYRTSVDIFIKDPKSNVIQQWFSQKGDLGVVSKTFQLSSNPIFGDWSIQVQVNDQQYYQSFQVLEYVLPKFEVTVQTPLYCSLKSKQLNGSVIAKYTYGKPVKGSLSLTFLPLSFWGKKKNITKSFEINGFANFSFDNYEMKKVMNLKPLTDVSEGSYENVDPSFPGPAEIIATVTESLTGISRMASTNVFFKQHDYIIEIFDYTTVLKPSLNFTATVKVSRSDGNQLTPEEIENDLVTVVTQRKNNHPESQRDQEMDYIQTVNYTIPQNGIIKIEFPVMSISGELQLKAYFLDGTSSVTVHSMFTSPSKTYIQLKTRDEYIKVGSPFDLMVSGNRQFKDLSYMVISKGQLVAAGKQSSRTFSLTPEASWAPKACIIAYYIAEDGEIINDILKIPVQLVFENKVKLFWSKPTVKPSDKVSLRISATQSDSLVGIVAVDKSVTLMENSNSITMETMVHELELYNTEYYLGMFMNSFAVFQECGLWVLTDATLIRDSIDEVYDTEEYSERFAEENEANLVDFEDASSVNNVHVRKNFPETWIWLDAYMGSKIYEEFEVTVPDSITSWVASAFVISEDLGFGLTTVPAELQAFQPFFLFLNLPYSVIRGEEFALEVSIVNYLKDTIKVVILIEESDSFDILMTSNDTNGTIYRKTVQVPRDNGVTLVFPIKPTHLGEIPITVTAASPTASDAVTQTIVVKPEGIEKSYSKSVLLDLTDSNVESKQQSMRFSFPPDTVIGSERVQITAIGDILGSSINGLSSLIRMPYGCGEQNMIYFAPNIYILDYLTKQKQLTVNLKEKALSYMRQGYQRELLYQREDGSFSAFGDIDSSGSTWLSAFVLRCFLEADYYIDIDQDVLHRTYTWLNAHKKFNGEFWEPGRVIHSELQGGTKSPVTLTAYIVTSVLGYKKYQPNIDVQDSIKFLEFEFSRGISDNYTLAIISYALSTVGSPKAEEALNLLMQRSEKEGDTQFWLSSGPALSGSWQPRSVDIEIAAYALLAHTLHHVSEGIPVMRWLIQQRNSLGGFVSTQDTVVALKALSEFSALVHKENTDIQLTVTGPGIPRSIHFRIDSQNLFLLHQEELHALDPITVNVSAHGSGFAICQLNVDYNVKGSGSSKRRRSTENQEVFDLDVIVNNEDDISHLNLNVCTSHLGSERTGMVLMEVNLLSGFSASSDSIPLSETLKKVEYDNGKLNLYLDSVNESQFCVNIPTVRDYKVSNIRDGSVSVMDYYEPRRQAVRSYNTQVKLSSCYLSPDTNCKSHTDGATDSLRRSSSLLVFCSVLLYFVQH.

The first 21 residues, 1 to 21, serve as a signal peptide directing secretion; it reads MRSRRLLSAAHLLCLCAVALA. Asparagine 67, asparagine 117, asparagine 246, asparagine 278, asparagine 370, and asparagine 421 each carry an N-linked (GlcNAc...) asparagine glycan. The interval 595 to 704 is bait region (approximate); it reads DKSVTLMENS…TWIWLDAYMG (110 aa). A cross-link (isoglutamyl cysteine thioester (Cys-Gln)) is located at residues 923-926; it reads CGEQ. An N-linked (GlcNAc...) asparagine glycan is attached at asparagine 1088. Alanine 1419 is lipidated: GPI-anchor amidated alanine. Positions 1420–1442 are cleaved as a propeptide — removed in mature form; the sequence is TDSLRRSSSLLVFCSVLLYFVQH.

The protein belongs to the protease inhibitor I39 (alpha-2-macroglobulin) family. Heterodimer; disulfide-linked. Interacts with TGFB1 and TGFBR1. Forms a heteromeric complex with TGFBR1, TGFBR2 and TGFBR3 in a ligand-independent manner. Post-translationally, N-glycosylated. 2 forms of 150 (p150) and 120 kDa (p120) exist due to proteolytic degradation from a 180 kDa form.

The protein resides in the cell membrane. Functionally, modulates negatively TGFB1 signaling in keratinocytes. In Mus musculus (Mouse), this protein is CD109 antigen (Cd109).